The following is a 361-amino-acid chain: Sensor protein VanSC (361 aa).

The next 2 membrane-spanning stretches (helical) occupy residues 16-36 and 59-79; these read FVTT…IRFI and WLFC…IYYM. The region spanning 144 to 359 is the Histidine kinase domain; sequence YLAHDLRTPL…IFNVRLPKPA (216 aa). H147 carries the post-translational modification Phosphohistidine; by autocatalysis. E252 is a binding site for Mg(2+).

Autophosphorylated.

It localises to the membrane. It carries out the reaction ATP + protein L-histidine = ADP + protein N-phospho-L-histidine.. The chain is Sensor protein VanSC from Enterococcus gallinarum.